The following is a 208-amino-acid chain: Guanylate kinase (208 aa).

The Guanylate kinase-like domain occupies 4-185; it reads GNLYILSAPS…TLKDLQSILQ (182 aa). 11 to 18 contributes to the ATP binding site; that stretch reads APSGAGKS.

The protein belongs to the guanylate kinase family.

The protein localises to the cytoplasm. The catalysed reaction is GMP + ATP = GDP + ADP. Its function is as follows. Essential for recycling GMP and indirectly, cGMP. In Haemophilus influenzae (strain 86-028NP), this protein is Guanylate kinase.